A 601-amino-acid chain; its full sequence is Phosphomethylpyrimidine synthase (601 aa).

Substrate-binding positions include Asn224, Met253, Tyr282, His318, 338–340 (SRG), 379–382 (DGLR), and Glu418. Position 422 (His422) interacts with Zn(2+). Tyr445 contacts substrate. His486 provides a ligand contact to Zn(2+). Positions 566, 569, and 574 each coordinate [4Fe-4S] cluster.

Belongs to the ThiC family. As to quaternary structure, homodimer. Requires [4Fe-4S] cluster as cofactor.

The catalysed reaction is 5-amino-1-(5-phospho-beta-D-ribosyl)imidazole + S-adenosyl-L-methionine = 4-amino-2-methyl-5-(phosphooxymethyl)pyrimidine + CO + 5'-deoxyadenosine + formate + L-methionine + 3 H(+). The protein operates within cofactor biosynthesis; thiamine diphosphate biosynthesis. In terms of biological role, catalyzes the synthesis of the hydroxymethylpyrimidine phosphate (HMP-P) moiety of thiamine from aminoimidazole ribotide (AIR) in a radical S-adenosyl-L-methionine (SAM)-dependent reaction. The sequence is that of Phosphomethylpyrimidine synthase from Xylella fastidiosa (strain 9a5c).